Reading from the N-terminus, the 354-residue chain is Rhodopsin (354 aa).

At 1 to 36 the chain is on the extracellular side; sequence MNGTEGPNFYVPFSNKSGVVRSPFEYPQYYLAEPWQ. N-linked (GlcNAc...) asparagine glycosylation is found at Asn2 and Asn15. The chain crosses the membrane as a helical span at residues 37–61; sequence YSVLAAYMFLLILLGFPVNFLTLYV. Residues 62–73 lie on the Cytoplasmic side of the membrane; it reads TIQHKKLRTPLN. Residues 74 to 96 traverse the membrane as a helical segment; that stretch reads YILLNLAFANHFMVFGGFPVTMY. The Extracellular portion of the chain corresponds to 97–110; sequence SSMHGYFVFGQTGC. An intrachain disulfide couples Cys110 to Cys187. The helical transmembrane segment at 111–133 threads the bilayer; it reads YIEGFFATMGGEIALWSLVVLAI. A 'Ionic lock' involved in activated form stabilization motif is present at residues 134–136; that stretch reads ERY. Over 134 to 152 the chain is Cytoplasmic; sequence ERYVVVCKPMSNFRFGENH. The chain crosses the membrane as a helical span at residues 153 to 173; sequence AIMGVMMTWIMALACAAPPLF. Residues 174–202 are Extracellular-facing; that stretch reads GWSRYIPEGMQCSCGVDYYTLKPEVNNES. The chain crosses the membrane as a helical span at residues 203-224; it reads FVIYMFLVHFTIPLMIIFFCYG. Topologically, residues 225 to 252 are cytoplasmic; that stretch reads RLVCTVKEAAAQQQESATTQKAEKEVTR. The chain crosses the membrane as a helical span at residues 253–274; that stretch reads MVIIMVVAFLICWVPYASVAFY. Residues 275–286 are Extracellular-facing; it reads IFSNQGTDFGPI. A helical transmembrane segment spans residues 287–308; that stretch reads FMTVPAFFAKSSAIYNPVIYIV. An N6-(retinylidene)lysine modification is found at Lys296. The Cytoplasmic segment spans residues 309-354; the sequence is LNKQFRNCMITTICCGKNPFGDDETTSAATSKTEASSVSSSQVSPA. 2 S-palmitoyl cysteine lipidation sites follow: Cys322 and Cys323. A disordered region spans residues 332 to 354; it reads ETTSAATSKTEASSVSSSQVSPA. The segment covering 334–354 has biased composition (low complexity); sequence TSAATSKTEASSVSSSQVSPA.

It belongs to the G-protein coupled receptor 1 family. Opsin subfamily. Contains one covalently linked retinal chromophore. Upon light absorption, the covalently bound 11-cis-retinal is converted to all-trans-retinal. After hydrolysis of the Schiff base and release of the covalently bound all-trans-retinal, active rhodopsin is regenerated by binding of a fresh molecule of 11-cis-retinal.

It localises to the membrane. It is found in the cell projection. The protein localises to the cilium. The protein resides in the photoreceptor outer segment. Photoreceptor required for image-forming vision at low light intensity. Required for photoreceptor cell viability after birth. Light-induced isomerization of 11-cis to all-trans retinal triggers a conformational change that activates signaling via G-proteins. Subsequent receptor phosphorylation mediates displacement of the bound G-protein alpha subunit by arrestin and terminates signaling. The chain is Rhodopsin (RHO) from Ambystoma tigrinum (Eastern tiger salamander).